The sequence spans 168 residues: Cytolysin secretion protein (168 aa).

This Vibrio vulnificus (strain CMCP6) protein is Cytolysin secretion protein (vvhB).